The following is a 236-amino-acid chain: ADTIVAVELDTYPNTDIGDPNYQHIGINIKSIRSKATTRWNVQDGKVGTAHISYNSVAKRLSAIVSYPGGSSATVSYDVDLNNILPEWVRVGLSASTGLYKETNTILSWSFTSKLKTNSTADAQSLHFTFNQFSQNPKDLILQGDASTDSDGNLQLTRVSNGSPQSNSVGRALYYAPVHVWDKSAVVASFDATFTFLIKSTDSDIADGIAWFIANTDSSIPHGSGGRLLGLFPDAN.

Mn(2+) contacts are provided by Glu-8 and Asp-10. Asp-10, Tyr-12, Asn-14, and Asp-19 together coordinate Ca(2+). Tyr-12 is a binding site for a carbohydrate. Mn(2+)-binding residues include Asp-19, His-24, and Ser-34. 99 to 100 (LY) provides a ligand contact to a carbohydrate. Residue Asp-207 coordinates Ca(2+). Arg-227 is an a carbohydrate binding site.

Belongs to the leguminous lectin family. In terms of assembly, equilibrium between homodimer and homotetramer. Oligomerization is pH-dependent with homotetramers forming at pH 6.5 and above. In terms of processing, the beta and gamma chains are produced by partial proteolytic processing of the lectin alpha chain by an asparaginyl endopeptidase. Mixture of 60% alpha lectin and 40% of its beta and gamma proteolytic fragments. As to expression, seed.

In terms of biological role, D-mannose/D-glucose-binding lectin. Has anti-inflammatory activity in rats. Induces histamine release in mast cells from rat. Induces lymphocyte proliferation and IFNG production. The polypeptide is Lectin alpha chain (Cratylia argentea (Cratylia floribunda)).